Consider the following 177-residue polypeptide: Inorganic pyrophosphatase (177 aa).

Positions 30, 44, and 56 each coordinate substrate. The Mg(2+) site is built by Asp66, Asp71, and Asp103. Residue Tyr142 coordinates substrate.

Belongs to the PPase family. Homohexamer. Mg(2+) serves as cofactor.

The protein resides in the cytoplasm. It carries out the reaction diphosphate + H2O = 2 phosphate + H(+). Its function is as follows. Catalyzes the hydrolysis of inorganic pyrophosphate (PPi) forming two phosphate ions. This is Inorganic pyrophosphatase from Mesorhizobium japonicum (strain LMG 29417 / CECT 9101 / MAFF 303099) (Mesorhizobium loti (strain MAFF 303099)).